The sequence spans 133 residues: UPF0225 protein BP2036 (133 aa).

It belongs to the UPF0225 family.

This Bordetella pertussis (strain Tohama I / ATCC BAA-589 / NCTC 13251) protein is UPF0225 protein BP2036.